The chain runs to 1235 residues: ATP-dependent helicase/nuclease subunit A (1235 aa).

The UvrD-like helicase ATP-binding domain occupies 4 to 470 (REYTLSQKQA…IILAENFRSM (467 aa)). 25–32 (ASAGSGKT) contacts ATP. A UvrD-like helicase C-terminal domain is found at 501–795 (QFGAKYYPDE…KLMTIHGSKG (295 aa)).

The protein belongs to the helicase family. AddA subfamily. In terms of assembly, heterodimer of AddA and AddB/RexB. The cofactor is Mg(2+).

The enzyme catalyses Couples ATP hydrolysis with the unwinding of duplex DNA by translocating in the 3'-5' direction.. The catalysed reaction is ATP + H2O = ADP + phosphate + H(+). Its function is as follows. The heterodimer acts as both an ATP-dependent DNA helicase and an ATP-dependent, dual-direction single-stranded exonuclease. Recognizes the chi site generating a DNA molecule suitable for the initiation of homologous recombination. The AddA nuclease domain is required for chi fragment generation; this subunit has the helicase and 3' -&gt; 5' nuclease activities. The polypeptide is ATP-dependent helicase/nuclease subunit A (Pediococcus pentosaceus (strain ATCC 25745 / CCUG 21536 / LMG 10740 / 183-1w)).